The primary structure comprises 358 residues: Arginine kinase (358 aa).

A Phosphagen kinase N-terminal domain is found at Ser2–Lys84. Gly57 to Tyr61 is a substrate binding site. Residues Phe112–Leu350 form the Phosphagen kinase C-terminal domain. ATP is bound by residues Ser115–Arg119 and His178. Glu218 provides a ligand contact to substrate. Arg222 contacts ATP. Substrate is bound at residue Cys265. ATP is bound by residues Arg274–His278 and Arg303–Glu308. Glu308 contacts substrate.

The protein belongs to the ATP:guanido phosphotransferase family.

It catalyses the reaction L-arginine + ATP = N(omega)-phospho-L-arginine + ADP + H(+). In Turbo cornutus (Horned turban), this protein is Arginine kinase.